The chain runs to 469 residues: Glutamine synthetase (469 aa).

Positions 14–99 constitute a GS beta-grasp domain; that stretch reads NDVKFVDLRF…VCDILDPVSG (86 aa). The GS catalytic domain occupies 106–469; it reads RRGTAKKAEA…PVEYDMYYSA (364 aa). 2 residues coordinate Mg(2+): Glu131 and Glu133. Residue Glu209 participates in ATP binding. Mg(2+) contacts are provided by Glu214 and Asp221. Residues 265–266 and Gly266 each bind L-glutamate; that span reads NG. His270 lines the Mg(2+) pocket. ATP-binding positions include 272–274 and Ser274; that span reads HQS. 3 residues coordinate L-glutamate: Arg322, Glu328, and Arg340. The ATP site is built by Arg340, Arg345, and Lys353. Residue Glu358 participates in Mg(2+) binding. Arg360 serves as a coordination point for L-glutamate. Tyr398 is modified (O-AMP-tyrosine).

Belongs to the glutamine synthetase family. In terms of assembly, oligomer of 12 subunits arranged in the form of two hexameric ring. It depends on Mg(2+) as a cofactor.

The protein localises to the cytoplasm. The enzyme catalyses L-glutamate + NH4(+) + ATP = L-glutamine + ADP + phosphate + H(+). The activity of this enzyme could be controlled by adenylation under conditions of abundant glutamine. Functionally, catalyzes the ATP-dependent biosynthesis of glutamine from glutamate and ammonia. The polypeptide is Glutamine synthetase (Rhizobium leguminosarum bv. viciae).